Reading from the N-terminus, the 451-residue chain is GTPase Der (451 aa).

EngA-type G domains are found at residues 5 to 170 (PVVA…VEPE) and 186 to 359 (IKLA…AAAF). Residues 11–18 (GRPNVGKS), 58–62 (DTGGF), 122–125 (NKAE), 192–199 (GRPNVGKS), 239–243 (DTAGL), and 304–307 (NKWD) contribute to the GTP site. Positions 360–444 (AKLSTPKLTR…PLRIEFKSSR (85 aa)) constitute a KH-like domain.

The protein belongs to the TRAFAC class TrmE-Era-EngA-EngB-Septin-like GTPase superfamily. EngA (Der) GTPase family. As to quaternary structure, associates with the 50S ribosomal subunit.

In terms of biological role, GTPase that plays an essential role in the late steps of ribosome biogenesis. The sequence is that of GTPase Der from Bordetella petrii (strain ATCC BAA-461 / DSM 12804 / CCUG 43448).